The primary structure comprises 155 residues: Interleukin-2 (155 aa).

Residues 1–20 form the signal peptide; that stretch reads MYKMQLLSCIALTLVLVANS. The O-linked (GalNAc...) threonine glycan is linked to Thr24. The cysteines at positions 79 and 127 are disulfide-linked. A glycan (N-linked (GlcNAc...) asparagine) is linked at Asn112.

This sequence belongs to the IL-2 family.

The protein resides in the secreted. Cytokine produced by activated CD4-positive helper T-cells and to a lesser extend activated CD8-positive T-cells and natural killer (NK) cells that plays pivotal roles in the immune response and tolerance. Binds to a receptor complex composed of either the high-affinity trimeric IL-2R (IL2RA/CD25, IL2RB/CD122 and IL2RG/CD132) or the low-affinity dimeric IL-2R (IL2RB and IL2RG). Interaction with the receptor leads to oligomerization and conformation changes in the IL-2R subunits resulting in downstream signaling starting with phosphorylation of JAK1 and JAK3. In turn, JAK1 and JAK3 phosphorylate the receptor to form a docking site leading to the phosphorylation of several substrates including STAT5. This process leads to activation of several pathways including STAT, phosphoinositide-3-kinase/PI3K and mitogen-activated protein kinase/MAPK pathways. Functions as a T-cell growth factor and can increase NK-cell cytolytic activity as well. Promotes strong proliferation of activated B-cells and subsequently immunoglobulin production. Plays a pivotal role in regulating the adaptive immune system by controlling the survival and proliferation of regulatory T-cells, which are required for the maintenance of immune tolerance. Moreover, participates in the differentiation and homeostasis of effector T-cell subsets, including Th1, Th2, Th17 as well as memory CD8-positive T-cells. This Canis lupus familiaris (Dog) protein is Interleukin-2 (IL2).